An 80-amino-acid chain; its full sequence is Defensin-like protein 46 (80 aa).

The N-terminal stretch at 1 to 27 is a signal peptide; it reads MGSTKTLVTCFLTIILAVSLSNHNVLA. 4 disulfides stabilise this stretch: cysteine 40–cysteine 78, cysteine 44–cysteine 65, cysteine 50–cysteine 76, and cysteine 54–cysteine 77.

Belongs to the DEFL family.

Its subcellular location is the secreted. The protein is Defensin-like protein 46 of Arabidopsis thaliana (Mouse-ear cress).